A 118-amino-acid chain; its full sequence is Acidic phospholipase A2 homolog (118 aa).

7 disulfide bridges follow: Cys11/Cys70, Cys25/Cys117, Cys27/Cys43, Cys42/Cys98, Cys49/Cys91, Cys59/Cys84, and Cys77/Cys89.

It belongs to the phospholipase A2 family. Group I subfamily. A49 sub-subfamily. In terms of tissue distribution, expressed by the venom gland.

It is found in the secreted. Its function is as follows. Snake venom phospholipase A2 (PLA2) homolog that lacks both catalytic and neurotoxicity activities. The chain is Acidic phospholipase A2 homolog from Bungarus fasciatus (Banded krait).